We begin with the raw amino-acid sequence, 342 residues long: MKSAMTALALSVGDPSGIGPEIAIAAFLAREAVGLPAFYLLADPALIASRASRLGVSVPIVETTPALAAQVFARALPIVPLAARFIDSPGRPDPANAAGTVEAIDRAVAACLAGDAAAMVTCPIAKKPLYDAGFRFPGHTEYLAHLAARHSGVEAMPVMMLAGPDLRTVPVTIHIALAEVPKALTTELIVATARITAADLAGRFGIARPRLAIAGLNPHAGEGGSLGLEDEHIVRPAVDILRAEGIDAFGPLAADTLFHARARAGYDAALCMYHDQALIPAKTLAFDDAVNVTLGLPFIRTSPDHGTAFDIAGKGIARPDSLIAALKLARTLADTDKKAAAA.

Residues His-139 and Thr-140 each contribute to the substrate site. A divalent metal cation contacts are provided by His-174, His-219, and His-274. The substrate site is built by Lys-282, Asn-291, and Arg-300.

Belongs to the PdxA family. In terms of assembly, homodimer. It depends on Zn(2+) as a cofactor. Mg(2+) is required as a cofactor. The cofactor is Co(2+).

The protein localises to the cytoplasm. It catalyses the reaction 4-(phosphooxy)-L-threonine + NAD(+) = 3-amino-2-oxopropyl phosphate + CO2 + NADH. Its pathway is cofactor biosynthesis; pyridoxine 5'-phosphate biosynthesis; pyridoxine 5'-phosphate from D-erythrose 4-phosphate: step 4/5. In terms of biological role, catalyzes the NAD(P)-dependent oxidation of 4-(phosphooxy)-L-threonine (HTP) into 2-amino-3-oxo-4-(phosphooxy)butyric acid which spontaneously decarboxylates to form 3-amino-2-oxopropyl phosphate (AHAP). The polypeptide is 4-hydroxythreonine-4-phosphate dehydrogenase (Mesorhizobium japonicum (strain LMG 29417 / CECT 9101 / MAFF 303099) (Mesorhizobium loti (strain MAFF 303099))).